The primary structure comprises 887 residues: Alanine--tRNA ligase (887 aa).

H563, H567, C677, and H681 together coordinate Zn(2+).

Belongs to the class-II aminoacyl-tRNA synthetase family. It depends on Zn(2+) as a cofactor.

The protein localises to the cytoplasm. The catalysed reaction is tRNA(Ala) + L-alanine + ATP = L-alanyl-tRNA(Ala) + AMP + diphosphate. Catalyzes the attachment of alanine to tRNA(Ala) in a two-step reaction: alanine is first activated by ATP to form Ala-AMP and then transferred to the acceptor end of tRNA(Ala). Also edits incorrectly charged Ser-tRNA(Ala) and Gly-tRNA(Ala) via its editing domain. This is Alanine--tRNA ligase from Dinoroseobacter shibae (strain DSM 16493 / NCIMB 14021 / DFL 12).